We begin with the raw amino-acid sequence, 109 residues long: Ubiquitin-related modifier 1 homolog (109 aa).

Glycine 109 carries the 1-thioglycine modification. Glycine 109 participates in a covalent cross-link: Glycyl lysine isopeptide (Gly-Lys) (interchain with K-? in acceptor proteins).

Belongs to the URM1 family. C-terminal thiocarboxylation occurs in 2 steps, it is first acyl-adenylated (-COAMP) via the hesA/moeB/thiF part of the MOCS3 homolog, then thiocarboxylated (-COSH) via the rhodanese domain of the MOCS3 homolog.

It is found in the cytoplasm. It participates in tRNA modification; 5-methoxycarbonylmethyl-2-thiouridine-tRNA biosynthesis. Acts as a sulfur carrier required for 2-thiolation of mcm(5)S(2)U at tRNA wobble positions of cytosolic tRNA(Lys), tRNA(Glu) and tRNA(Gln). Serves as sulfur donor in tRNA 2-thiolation reaction by being thiocarboxylated (-COSH) at its C-terminus by MOCS3. The sulfur is then transferred to tRNA to form 2-thiolation of mcm(5)S(2)U. Also acts as a ubiquitin-like protein (UBL) that is covalently conjugated via an isopeptide bond to lysine residues of target proteins. The thiocarboxylated form serves as substrate for conjugation and oxidative stress specifically induces the formation of UBL-protein conjugates. The sequence is that of Ubiquitin-related modifier 1 homolog from Anopheles gambiae (African malaria mosquito).